A 366-amino-acid chain; its full sequence is tRNA/tmRNA (uracil-C(5))-methyltransferase (366 aa).

S-adenosyl-L-methionine is bound by residues Q189, Y217, N222, E238, and D298. The active-site Nucleophile is the C323. E357 (proton acceptor) is an active-site residue.

The protein belongs to the class I-like SAM-binding methyltransferase superfamily. RNA M5U methyltransferase family. TrmA subfamily.

The enzyme catalyses uridine(54) in tRNA + S-adenosyl-L-methionine = 5-methyluridine(54) in tRNA + S-adenosyl-L-homocysteine + H(+). The catalysed reaction is uridine(341) in tmRNA + S-adenosyl-L-methionine = 5-methyluridine(341) in tmRNA + S-adenosyl-L-homocysteine + H(+). In terms of biological role, dual-specificity methyltransferase that catalyzes the formation of 5-methyluridine at position 54 (m5U54) in all tRNAs, and that of position 341 (m5U341) in tmRNA (transfer-mRNA). This Shewanella putrefaciens (strain CN-32 / ATCC BAA-453) protein is tRNA/tmRNA (uracil-C(5))-methyltransferase.